The primary structure comprises 791 residues: Vezatin (791 aa).

A run of 2 helical transmembrane segments spans residues 138–158 (IATP…ALAA) and 163–183 (SISS…FTVL). Residues 435-464 (VRSLQLHLKALLNEVIILEDELEKLSSCKE) are a coiled coil. Residues 752 to 769 (GDEWDDDDDDNDNDDDNY) show a composition bias toward acidic residues. A disordered region spans residues 752–791 (GDEWDDDDDDNDNDDDNYDQVKNVESHEKERNNVSLQLEE). Positions 773 to 783 (KNVESHEKERN) are enriched in basic and acidic residues.

Belongs to the vezatin family. As to quaternary structure, interacts with myosin VIIa and the cadherin-catenins complex.

The protein localises to the cell membrane. Its subcellular location is the cell junction. The protein resides in the adherens junction. It localises to the nucleus. Functionally, plays a pivotal role in the establishment of adherens junctions and their maintenance in adult life. The sequence is that of Vezatin (vezt) from Xenopus tropicalis (Western clawed frog).